We begin with the raw amino-acid sequence, 363 residues long: Type-2 angiotensin II receptor (363 aa).

At 1–45 (MKDNFSFAATSRNITSSLPFVNLNMSGTNDLIFNCSHKPSDKHLE) the chain is on the extracellular side. 4 N-linked (GlcNAc...) asparagine glycosylation sites follow: Asn4, Asn13, Asn24, and Asn34. Intrachain disulfides connect Cys35–Cys290 and Cys117–Cys195. A helical membrane pass occupies residues 46 to 70 (AIPVLYYLIFVIGFAVNIIVVSLFC). The Cytoplasmic portion of the chain corresponds to 71 to 80 (CQKGPKKVSS). Residues 81-104 (IYIFNLAVADLLLLATLPLWATYY) traverse the membrane as a helical segment. Residues Tyr103 and Tyr104 each contribute to the angiotensin II site. Over 105–114 (SYRYDWLFGP) the chain is Extracellular. A helical transmembrane segment spans residues 115–140 (VMCKVFGSFLTLNMFASIFFITCMSV). At 141–159 (DRYQSVIYPFLSQRRNPWQ) the chain is on the cytoplasmic side. A helical transmembrane segment spans residues 160–181 (ASYVVPLVWCMACLSSLPTFYF). 3 residues coordinate angiotensin II: Arg182, Tyr204, and Lys215. The Extracellular segment spans residues 182-206 (RDVRTIEYLGVNACVMAFPPEKYAQ). Residues 207–232 (WSAGIALMKNVLGFIIPLIFIATCYF) form a helical membrane-spanning segment. Over 233-257 (GIRKHLLKTNSYGKNRITRDQVLKM) the chain is Cytoplasmic. A helical membrane pass occupies residues 258-281 (AAAVVLAFIICWLPFHVLTFLDAL). An angiotensin II-binding site is contributed by Asp279. Residues 282–294 (SWMGIINSCEVMA) are Extracellular-facing. Residues 295 to 320 (VIDLALPFAILLGFTNSCVNPFLYCF) form a helical membrane-spanning segment. Position 297 (Asp297) interacts with angiotensin II. The Cytoplasmic segment spans residues 321–363 (VGNRFQQKLRSMFRVPITWLQGKRETMSCRKSSSLREMDTFVS). The tract at residues 324–333 (RFQQKLRSMF) is helix VIII. The residue at position 354 (Ser354) is a Phosphoserine; by PKC.

It belongs to the G-protein coupled receptor 1 family. In terms of assembly, interacts with MTUS1.

The protein localises to the cell membrane. Its function is as follows. Receptor for angiotensin II, a vasoconstricting peptide. Signals primarily via a non-canonical G-protein- and beta-arrestin independent pathways. Cooperates with MTUS1 to inhibit ERK2 activation and cell proliferation. This is Type-2 angiotensin II receptor (AGTR2) from Meriones unguiculatus (Mongolian jird).